The primary structure comprises 249 residues: Cytoplasmic envelopment protein 1 (249 aa).

Belongs to the herpesviridae cytoplasmic envelopment protein 1 family.

It is found in the virion. The protein resides in the virion tegument. The protein localises to the host cytoplasm. It localises to the host Golgi apparatus. Its function is as follows. Plays a critical role in cytoplasmic virus egress. Participates in the final step of tegumentation and envelope acquisition within the host cytoplasm. The polypeptide is Cytoplasmic envelopment protein 1 (UL103) (Homo sapiens (Human)).